We begin with the raw amino-acid sequence, 178 residues long: ADP-ribosylation factor-like protein 5 (178 aa).

G2 is lipidated: N-myristoyl glycine. GTP-binding positions include 24-31 (GLDNAGKT), 67-71 (DIGGQ), and 126-129 (NKQD).

The protein belongs to the small GTPase superfamily. Arf family.

It is found in the golgi apparatus. In terms of biological role, GTP-binding protein that may be involved in protein trafficking; may modulate vesicle budding and uncoating within the Golgi apparatus. Plays a role in the shedding of pathogen spores from intestinal cells. The chain is ADP-ribosylation factor-like protein 5 (arl-5) from Caenorhabditis elegans.